Here is a 385-residue protein sequence, read N- to C-terminus: Succinate--CoA ligase [ADP-forming] subunit beta (385 aa).

An ATP-grasp domain is found at 9 to 244 (KEVLRKYGVS…LDEEDPKEIE (236 aa)). Residues Lys46, 53–55 (GRG), Glu99, Cys102, and Glu107 contribute to the ATP site. Positions 199 and 213 each coordinate Mg(2+). Substrate is bound by residues Asn264 and 321–323 (GIM).

The protein belongs to the succinate/malate CoA ligase beta subunit family. In terms of assembly, heterotetramer of two alpha and two beta subunits. Mg(2+) serves as cofactor.

The catalysed reaction is succinate + ATP + CoA = succinyl-CoA + ADP + phosphate. It carries out the reaction GTP + succinate + CoA = succinyl-CoA + GDP + phosphate. The protein operates within carbohydrate metabolism; tricarboxylic acid cycle; succinate from succinyl-CoA (ligase route): step 1/1. Succinyl-CoA synthetase functions in the citric acid cycle (TCA), coupling the hydrolysis of succinyl-CoA to the synthesis of either ATP or GTP and thus represents the only step of substrate-level phosphorylation in the TCA. The beta subunit provides nucleotide specificity of the enzyme and binds the substrate succinate, while the binding sites for coenzyme A and phosphate are found in the alpha subunit. This chain is Succinate--CoA ligase [ADP-forming] subunit beta, found in Bacillus velezensis (strain DSM 23117 / BGSC 10A6 / LMG 26770 / FZB42) (Bacillus amyloliquefaciens subsp. plantarum).